The sequence spans 289 residues: uncharacterized protein (289 aa).

A disordered region spans residues 268-289; it reads SDDGYETQWSDGPYSIPSGLSD.

This is an uncharacterized protein from Zea mays (Maize).